The chain runs to 176 residues: Large ribosomal subunit protein uL22 (176 aa).

Residues 113-176 (VVESRPSKDQ…ETSEAKGGSD (64 aa)) are disordered. The span at 136–152 (SKAAATAPAKKSSASKA) shows a compositional bias: low complexity. The span at 159–176 (TKAESKTSETSEAKGGSD) shows a compositional bias: basic and acidic residues.

Belongs to the universal ribosomal protein uL22 family. Part of the 50S ribosomal subunit.

This protein binds specifically to 23S rRNA; its binding is stimulated by other ribosomal proteins, e.g. L4, L17, and L20. It is important during the early stages of 50S assembly. It makes multiple contacts with different domains of the 23S rRNA in the assembled 50S subunit and ribosome. In terms of biological role, the globular domain of the protein is located near the polypeptide exit tunnel on the outside of the subunit, while an extended beta-hairpin is found that lines the wall of the exit tunnel in the center of the 70S ribosome. The sequence is that of Large ribosomal subunit protein uL22 from Mycobacterium marinum (strain ATCC BAA-535 / M).